Consider the following 71-residue polypeptide: UPF0346 protein Sez_1447 (71 aa).

Belongs to the UPF0346 family.

The sequence is that of UPF0346 protein Sez_1447 from Streptococcus equi subsp. zooepidemicus (strain MGCS10565).